A 306-amino-acid polypeptide reads, in one-letter code: Curved DNA-binding protein (306 aa).

Residues 5 to 69 enclose the J domain; it reads DYYAIMGVKP…QRRAEYDQLW (65 aa).

Its subcellular location is the cytoplasm. The protein localises to the nucleoid. Functionally, DNA-binding protein that preferentially recognizes a curved DNA sequence. It is probably a functional analog of DnaJ; displays overlapping activities with DnaJ, but functions under different conditions, probably acting as a molecular chaperone in an adaptive response to environmental stresses other than heat shock. Lacks autonomous chaperone activity; binds native substrates and targets them for recognition by DnaK. Its activity is inhibited by the binding of CbpM. The polypeptide is Curved DNA-binding protein (Citrobacter koseri (strain ATCC BAA-895 / CDC 4225-83 / SGSC4696)).